A 123-amino-acid polypeptide reads, in one-letter code: Glycine cleavage system H protein (123 aa).

In terms of domain architecture, Lipoyl-binding spans 22-104 (VATVGITSYA…FGAGWLVKVR (83 aa)). Lys-63 is subject to N6-lipoyllysine.

The protein belongs to the GcvH family. As to quaternary structure, the glycine cleavage system is composed of four proteins: P, T, L and H. Requires (R)-lipoate as cofactor.

Its function is as follows. The glycine cleavage system catalyzes the degradation of glycine. The H protein shuttles the methylamine group of glycine from the P protein to the T protein. The protein is Glycine cleavage system H protein of Clavibacter sepedonicus (Clavibacter michiganensis subsp. sepedonicus).